The following is a 61-amino-acid chain: Metallothionein-2D (61 aa).

N-acetylmethionine is present on Met-1. The beta stretch occupies residues 1-29 (MDPNCSCATRDSCACASSCKCKECKCTSC). Residues Cys-5, Cys-7, Cys-13, Cys-15, Cys-19, Cys-21, Cys-24, Cys-26, Cys-29, Cys-33, Cys-34, Cys-36, Cys-37, Cys-41, Cys-44, Cys-48, Cys-50, Cys-57, Cys-59, and Cys-60 each coordinate a divalent metal cation. The alpha stretch occupies residues 30–61 (KKSCCSCCPAGCTKCAQGCICKGASDKCSCCA).

It belongs to the metallothionein superfamily. Type 1 family. In terms of assembly, monomer.

In terms of biological role, metallothioneins have a high content of cysteine residues that bind various heavy metals; these proteins are transcriptionally regulated by both heavy metals and glucocorticoids. This is Metallothionein-2D from Oryctolagus cuniculus (Rabbit).